The chain runs to 142 residues: uncharacterized protein (142 aa).

Residues 1–9 (MDMVSPVLN) are Cytoplasmic-facing. A helical transmembrane segment spans residues 10–30 (LQSSILGELVGIIGKVFFLLI). Topologically, residues 31–41 (EEIKYPIITPK) are extracellular. The chain crosses the membrane as a helical span at residues 42-62 (IIVDAQISSWSLFFFASICNL). The Cytoplasmic portion of the chain corresponds to 63–101 (SAKFREPIVTTSSIISLMESEKDLKNVNEYFQIMAKMLF). The chain crosses the membrane as a helical span at residues 102–122 (ILENKIVVSLFVVFNISVLII). Residues 123–142 (VKSEPYSYGKVLFKPSSSIF) are Extracellular-facing.

Its subcellular location is the membrane. This is an uncharacterized protein from Saccharomyces cerevisiae (strain ATCC 204508 / S288c) (Baker's yeast).